Reading from the N-terminus, the 312-residue chain is Glyoxylate/hydroxypyruvate reductase A (312 aa).

Arginine 227 is a catalytic residue. Histidine 275 acts as the Proton donor in catalysis.

It belongs to the D-isomer specific 2-hydroxyacid dehydrogenase family. GhrA subfamily.

It is found in the cytoplasm. It catalyses the reaction glycolate + NADP(+) = glyoxylate + NADPH + H(+). The enzyme catalyses (R)-glycerate + NAD(+) = 3-hydroxypyruvate + NADH + H(+). It carries out the reaction (R)-glycerate + NADP(+) = 3-hydroxypyruvate + NADPH + H(+). Its function is as follows. Catalyzes the NADPH-dependent reduction of glyoxylate and hydroxypyruvate into glycolate and glycerate, respectively. The chain is Glyoxylate/hydroxypyruvate reductase A from Escherichia coli (strain 55989 / EAEC).